We begin with the raw amino-acid sequence, 253 residues long: Vitamin B12 import ATP-binding protein BtuD (253 aa).

The region spanning 4–236 (LQLSNVSVDT…NILSEVFEVD (233 aa)) is the ABC transporter domain. An ATP-binding site is contributed by 32 to 39 (GPNGAGKS).

The protein belongs to the ABC transporter superfamily. Vitamin B12 importer (TC 3.A.1.13.1) family. The complex is composed of two ATP-binding proteins (BtuD), two transmembrane proteins (BtuC) and a solute-binding protein (BtuF).

It localises to the cell inner membrane. It carries out the reaction an R-cob(III)alamin(out) + ATP + H2O = an R-cob(III)alamin(in) + ADP + phosphate + H(+). Its function is as follows. Part of the ABC transporter complex BtuCDF involved in vitamin B12 import. Responsible for energy coupling to the transport system. The polypeptide is Vitamin B12 import ATP-binding protein BtuD (Yersinia enterocolitica serotype O:8 / biotype 1B (strain NCTC 13174 / 8081)).